A 372-amino-acid chain; its full sequence is Queuine tRNA-ribosyltransferase (372 aa).

The active-site Proton acceptor is aspartate 89. Substrate contacts are provided by residues 89-93 (DSGGF), aspartate 161, and glycine 232. An RNA binding region spans residues 262–268 (GIGDLPS). Catalysis depends on aspartate 281, which acts as the Nucleophile. The interval 286–290 (TKAAR) is RNA binding; important for wobble base 34 recognition. Cysteine 319, cysteine 321, cysteine 324, and histidine 351 together coordinate Zn(2+).

The protein belongs to the queuine tRNA-ribosyltransferase family. Homodimer. Within each dimer, one monomer is responsible for RNA recognition and catalysis, while the other monomer binds to the replacement base PreQ1. Zn(2+) is required as a cofactor.

It catalyses the reaction 7-aminomethyl-7-carbaguanine + guanosine(34) in tRNA = 7-aminomethyl-7-carbaguanosine(34) in tRNA + guanine. Its pathway is tRNA modification; tRNA-queuosine biosynthesis. Catalyzes the base-exchange of a guanine (G) residue with the queuine precursor 7-aminomethyl-7-deazaguanine (PreQ1) at position 34 (anticodon wobble position) in tRNAs with GU(N) anticodons (tRNA-Asp, -Asn, -His and -Tyr). Catalysis occurs through a double-displacement mechanism. The nucleophile active site attacks the C1' of nucleotide 34 to detach the guanine base from the RNA, forming a covalent enzyme-RNA intermediate. The proton acceptor active site deprotonates the incoming PreQ1, allowing a nucleophilic attack on the C1' of the ribose to form the product. After dissociation, two additional enzymatic reactions on the tRNA convert PreQ1 to queuine (Q), resulting in the hypermodified nucleoside queuosine (7-(((4,5-cis-dihydroxy-2-cyclopenten-1-yl)amino)methyl)-7-deazaguanosine). The sequence is that of Queuine tRNA-ribosyltransferase from Chlamydia pneumoniae (Chlamydophila pneumoniae).